The chain runs to 348 residues: 4-hydroxyphenylpyruvate dioxygenase (348 aa).

VOC domains lie at 11–141 (GFAF…ITSP) and 151–303 (AIDH…IFTE). 3 residues coordinate Fe cation: histidine 154, histidine 232, and glutamate 312.

Belongs to the 4HPPD family. Fe cation serves as cofactor.

It carries out the reaction 3-(4-hydroxyphenyl)pyruvate + O2 = homogentisate + CO2. Catalyzes the transformation of p-hydroxyphenylpyruvate into HGA. Has hemolytic and brown pigment production activity. This Legionella pneumophila subsp. pneumophila (strain Philadelphia 1 / ATCC 33152 / DSM 7513) protein is 4-hydroxyphenylpyruvate dioxygenase (lly).